A 318-amino-acid chain; its full sequence is Transaldolase (318 aa).

Lys-132 acts as the Schiff-base intermediate with substrate in catalysis.

It belongs to the transaldolase family. Type 1 subfamily. In terms of assembly, homodimer.

It is found in the cytoplasm. The catalysed reaction is D-sedoheptulose 7-phosphate + D-glyceraldehyde 3-phosphate = D-erythrose 4-phosphate + beta-D-fructose 6-phosphate. It functions in the pathway carbohydrate degradation; pentose phosphate pathway; D-glyceraldehyde 3-phosphate and beta-D-fructose 6-phosphate from D-ribose 5-phosphate and D-xylulose 5-phosphate (non-oxidative stage): step 2/3. Transaldolase is important for the balance of metabolites in the pentose-phosphate pathway. The sequence is that of Transaldolase from Shewanella oneidensis (strain ATCC 700550 / JCM 31522 / CIP 106686 / LMG 19005 / NCIMB 14063 / MR-1).